A 778-amino-acid polypeptide reads, in one-letter code: Lon protease (778 aa).

One can recognise a Lon N-terminal domain in the interval 6–207 (LPLMALRDMV…TVISTLTSNI (202 aa)). 356-363 (GPPGVGKT) is a binding site for ATP. Positions 592–773 (EDQIGSTTGL…DQVLKHALVE (182 aa)) constitute a Lon proteolytic domain. Catalysis depends on residues serine 679 and lysine 722.

It belongs to the peptidase S16 family. In terms of assembly, homohexamer. Organized in a ring with a central cavity.

It is found in the cytoplasm. The enzyme catalyses Hydrolysis of proteins in presence of ATP.. In terms of biological role, ATP-dependent serine protease that mediates the selective degradation of mutant and abnormal proteins as well as certain short-lived regulatory proteins. Required for cellular homeostasis and for survival from DNA damage and developmental changes induced by stress. Degrades polypeptides processively to yield small peptide fragments that are 5 to 10 amino acids long. Binds to DNA in a double-stranded, site-specific manner. This is Lon protease from Rickettsia felis (strain ATCC VR-1525 / URRWXCal2) (Rickettsia azadi).